A 106-amino-acid polypeptide reads, in one-letter code: Glutaredoxin-1 (106 aa).

At Ala2 the chain carries N-acetylalanine. The Glutaredoxin domain occupies 3–106 (QAFVNSKIQP…TRLQQIGALK (104 aa)). The residue at position 9 (Lys9) is an N6-succinyllysine. Cystine bridges form between Cys23–Cys26 and Cys79–Cys83.

The protein belongs to the glutaredoxin family.

It is found in the cytoplasm. Functionally, has a glutathione-disulfide oxidoreductase activity in the presence of NADPH and glutathione reductase. Reduces low molecular weight disulfides and proteins. The protein is Glutaredoxin-1 (GLRX) of Sus scrofa (Pig).